The sequence spans 140 residues: Low calcium response locus protein T (140 aa).

This is Low calcium response locus protein T (lcrT) from Yersinia pseudotuberculosis serotype I (strain IP32953).